Consider the following 517-residue polypeptide: MDIIGGQHLRQMWDDLADVYGHKTALICESSGGVVNRYSYLELNQEINRTANLFYTLGIRKGDKVALHLDNCPEFIFCWFGLAKIGAIMVPINARLLREESAWILQNSQACLLVTSAQFYPMYQQIQQEDATQLRHICLTDVALPADDGVSSFTQLKNQQPATLCYAPPLSTDDTAEILFTSGTTSRPKGVVITHYNLRFAGYYSAWQCALRDDEVYLTVMPAFHIDCQCTAAMAAFSAGATFVLVEKYSARAFWGQVQKYRATITECIPMIIRTLMVQPPSANDRQHRLREVMFYLNLSEQEKDAFCERFGVRLLTSYGMTETIVGIIGDRLGDKRRWPSIGRAGFCYEAEIRDDHNRPLPAGEIGEICIKGVLGKTIFKEYFLNPKATAKVLEADGWLHTGDTGYRDEEGFFYFVDRRCNMIKRGGENVSCVELENIIATHPKIQDIVVVGIKDSIRDEAIKAFVVLNEGETLSEEEFFRFCEQNMAKFKVPSYLEIRKVLPRNCSGKIIRKNLK.

This sequence belongs to the ATP-dependent AMP-binding enzyme family.

It carries out the reaction 4-(trimethylamino)butanoate + ATP + CoA = 4-(trimethylamino)butanoyl-CoA + AMP + diphosphate. The enzyme catalyses crotonobetaine + ATP + CoA = crotonobetainyl-CoA + AMP + diphosphate. It catalyses the reaction (R)-carnitine + ATP + CoA = (R)-carnitinyl-CoA + AMP + diphosphate. It functions in the pathway amine and polyamine metabolism; carnitine metabolism. Functionally, catalyzes the transfer of CoA to carnitine, generating the initial carnitinyl-CoA needed for the CaiB reaction cycle. Also has activity toward crotonobetaine and gamma-butyrobetaine. In Shigella dysenteriae serotype 1 (strain Sd197), this protein is Crotonobetaine/carnitine--CoA ligase.